Reading from the N-terminus, the 796-residue chain is Probable phosphoketolase (796 aa).

The protein belongs to the XFP family. It depends on thiamine diphosphate as a cofactor.

This chain is Probable phosphoketolase, found in Synechococcus elongatus (strain ATCC 33912 / PCC 7942 / FACHB-805) (Anacystis nidulans R2).